A 355-amino-acid chain; its full sequence is uncharacterized protein (355 aa).

An N-terminal signal peptide occupies residues 1 to 27 (MESPIRTARRTLPLLIGATCLVLALTG). The N-palmitoyl cysteine moiety is linked to residue Cys-28. The S-diacylglycerol cysteine moiety is linked to residue Cys-28. Residues 33–53 (GPAQARPTPSASTSPKQAPAL) form a disordered region. The segment covering 39 to 48 (PTPSASTSPK) has biased composition (polar residues).

It is found in the cell membrane. This is an uncharacterized protein from Streptomyces coelicolor (strain ATCC BAA-471 / A3(2) / M145).